The primary structure comprises 975 residues: Translation initiation factor IF-2 (975 aa).

2 disordered regions span residues 49-110 (KLSG…APKA) and 193-339 (AAAP…GRGA). A compositionally biased stretch (basic residues) spans 63–72 (KKTAARKAAP). 3 stretches are compositionally biased toward low complexity: residues 73–94 (KKAA…AKTP), 193–202 (AAAPEAPAPQ), and 209–225 (VVGT…ASAP). Basic and acidic residues predominate over residues 308 to 318 (GADRGGRDFDK). Low complexity predominate over residues 324 to 336 (GPSAPAAGPAAAG). The tr-type G domain occupies 469-639 (TRPPVVTVMG…KLVAEVAELK (171 aa)). The interval 478-485 (GHVDHGKT) is G1. 478–485 (GHVDHGKT) contributes to the GTP binding site. The G2 stretch occupies residues 503-507 (GITQH). Positions 525-528 (DTPG) are G3. GTP is bound by residues 525 to 529 (DTPGH) and 579 to 582 (NKID). Positions 579-582 (NKID) are G4. Residues 615–617 (SAL) are G5.

Belongs to the TRAFAC class translation factor GTPase superfamily. Classic translation factor GTPase family. IF-2 subfamily.

It is found in the cytoplasm. One of the essential components for the initiation of protein synthesis. Protects formylmethionyl-tRNA from spontaneous hydrolysis and promotes its binding to the 30S ribosomal subunits. Also involved in the hydrolysis of GTP during the formation of the 70S ribosomal complex. The sequence is that of Translation initiation factor IF-2 from Bdellovibrio bacteriovorus (strain ATCC 15356 / DSM 50701 / NCIMB 9529 / HD100).